A 637-amino-acid chain; its full sequence is Threonine--tRNA ligase (637 aa).

The region spanning 1–61 is the TGS domain; that stretch reads MLNITLPDGS…VEDSAVQIIT (61 aa). Residues 242–533 are catalytic; sequence DHRKLGKQLD…LIENHAGSFP (292 aa). Cys333, His384, and His510 together coordinate Zn(2+).

It belongs to the class-II aminoacyl-tRNA synthetase family. In terms of assembly, homodimer. Zn(2+) is required as a cofactor.

It is found in the cytoplasm. The enzyme catalyses tRNA(Thr) + L-threonine + ATP = L-threonyl-tRNA(Thr) + AMP + diphosphate + H(+). In terms of biological role, catalyzes the attachment of threonine to tRNA(Thr) in a two-step reaction: L-threonine is first activated by ATP to form Thr-AMP and then transferred to the acceptor end of tRNA(Thr). Also edits incorrectly charged L-seryl-tRNA(Thr). This is Threonine--tRNA ligase from Neisseria meningitidis serogroup B (strain ATCC BAA-335 / MC58).